We begin with the raw amino-acid sequence, 333 residues long: Catabolite control protein A (333 aa).

The HTH lacI-type domain maps to 7–61 (ITIYDVAREAGVSMATVSRVVNGNKNVKENTRKKVLEVIDRLDYRPNAVARGLAS). Residues 9 to 28 (IYDVAREAGVSMATVSRVVN) constitute a DNA-binding region (H-T-H motif).

In terms of biological role, global transcriptional regulator of carbon catabolite repression (CCR) and carbon catabolite activation (CCA), which ensures optimal energy usage under diverse conditions. This is Catabolite control protein A (ccpA) from Streptococcus mutans serotype c (strain ATCC 700610 / UA159).